The primary structure comprises 488 residues: Germacrene A hydroxylase (488 aa).

At 1–6 the chain is on the cytoplasmic side; sequence MELSIT. A helical; Signal-anchor for type II membrane protein membrane pass occupies residues 7–23; the sequence is TSIALATIVFFLYKLAT. Topologically, residues 24 to 488 are lumenal; it reads RPKSTKKQLP…KTELLLVPSF (465 aa). Residues N169, N260, and N379 are each glycosylated (N-linked (GlcNAc...) asparagine). C432 provides a ligand contact to heme.

It belongs to the cytochrome P450 family. Heme serves as cofactor.

It localises to the endoplasmic reticulum membrane. The enzyme catalyses (+)-(R)-germacrene A + 3 reduced [NADPH--hemoprotein reductase] + 3 O2 = germacra-1(10),4,11(13)-trien-12-oate + 3 oxidized [NADPH--hemoprotein reductase] + 4 H2O + 4 H(+). It participates in secondary metabolite biosynthesis; terpenoid biosynthesis. In terms of biological role, involved in the biosynthesis of germacrene-derived sesquiterpene lactones. Catalyzes three consecutive oxidations of germacrene A to produce germacrene A acid. Could also catalyze the three-step oxidation of non-natural substrate amorphadiene to artemisinic acid. The protein is Germacrene A hydroxylase of Lactuca sativa (Garden lettuce).